Consider the following 40-residue polypeptide: Photosystem II reaction center protein J (40 aa).

Residues 8 to 28 traverse the membrane as a helical segment; that stretch reads IPLWIIGTVAGILVIGLVGVF.

Belongs to the PsbJ family. In terms of assembly, PSII is composed of 1 copy each of membrane proteins PsbA, PsbB, PsbC, PsbD, PsbE, PsbF, PsbH, PsbI, PsbJ, PsbK, PsbL, PsbM, PsbT, PsbX, PsbY, PsbZ, Psb30/Ycf12, at least 3 peripheral proteins of the oxygen-evolving complex and a large number of cofactors. It forms dimeric complexes.

The protein resides in the plastid. The protein localises to the chloroplast thylakoid membrane. Functionally, one of the components of the core complex of photosystem II (PSII). PSII is a light-driven water:plastoquinone oxidoreductase that uses light energy to abstract electrons from H(2)O, generating O(2) and a proton gradient subsequently used for ATP formation. It consists of a core antenna complex that captures photons, and an electron transfer chain that converts photonic excitation into a charge separation. In Helianthus annuus (Common sunflower), this protein is Photosystem II reaction center protein J.